A 380-amino-acid chain; its full sequence is Cytochrome b (380 aa).

4 consecutive transmembrane segments (helical) span residues 33–53 (FGSL…FLAM), 77–98 (WLIR…FLHV), 113–133 (WNMG…GYVL), and 178–198 (FFAF…VHLL). Heme b contacts are provided by H83 and H97. The heme b site is built by H182 and H196. H201 is an a ubiquinone binding site. 4 helical membrane passes run 226–246 (IKDF…TLFF), 288–308 (LGGV…PLLH), 320–340 (ITQT…WIGG), and 347–367 (FIII…ILMP).

The protein belongs to the cytochrome b family. In terms of assembly, the cytochrome bc1 complex contains 11 subunits: 3 respiratory subunits (MT-CYB, CYC1 and UQCRFS1), 2 core proteins (UQCRC1 and UQCRC2) and 6 low-molecular weight proteins (UQCRH/QCR6, UQCRB/QCR7, UQCRQ/QCR8, UQCR10/QCR9, UQCR11/QCR10 and a cleavage product of UQCRFS1). This cytochrome bc1 complex then forms a dimer. The cofactor is heme b.

The protein resides in the mitochondrion inner membrane. Component of the ubiquinol-cytochrome c reductase complex (complex III or cytochrome b-c1 complex) that is part of the mitochondrial respiratory chain. The b-c1 complex mediates electron transfer from ubiquinol to cytochrome c. Contributes to the generation of a proton gradient across the mitochondrial membrane that is then used for ATP synthesis. The polypeptide is Cytochrome b (MT-CYB) (Microtus guentheri (Gunther's vole)).